We begin with the raw amino-acid sequence, 175 residues long: Large ribosomal subunit protein uL6 (175 aa).

This sequence belongs to the universal ribosomal protein uL6 family. Part of the 50S ribosomal subunit.

In terms of biological role, this protein binds to the 23S rRNA, and is important in its secondary structure. It is located near the subunit interface in the base of the L7/L12 stalk, and near the tRNA binding site of the peptidyltransferase center. In Xylella fastidiosa (strain M12), this protein is Large ribosomal subunit protein uL6.